We begin with the raw amino-acid sequence, 393 residues long: Methylthioribose kinase (393 aa).

Residues asparagine 38, lysine 53, and 107-109 (EDL) each bind ATP. A substrate-binding site is contributed by aspartate 225. 242-244 (DPE) is an ATP binding site. A substrate-binding site is contributed by arginine 332.

It belongs to the methylthioribose kinase family. In terms of assembly, homodimer.

The enzyme catalyses 5-(methylsulfanyl)-D-ribose + ATP = 5-(methylsulfanyl)-alpha-D-ribose 1-phosphate + ADP + H(+). The protein operates within amino-acid biosynthesis; L-methionine biosynthesis via salvage pathway; S-methyl-5-thio-alpha-D-ribose 1-phosphate from S-methyl-5'-thioadenosine (hydrolase route): step 2/2. Functionally, catalyzes the phosphorylation of methylthioribose into methylthioribose-1-phosphate. The protein is Methylthioribose kinase of Bacillus cereus (strain B4264).